The chain runs to 320 residues: Cyclin-H (320 aa).

A Phosphoserine; by CDK8 modification is found at S5. S132 carries the post-translational modification Phosphoserine. S304 bears the Phosphoserine; by CDK8 mark.

This sequence belongs to the cyclin family. Cyclin C subfamily. Associates primarily with CDK7 and MAT1 to form the CAK complex. CAK can further associate with the core-TFIIH to form the TFIIH basal transcription factor.

It is found in the nucleus. Its function is as follows. Regulates CDK7, the catalytic subunit of the CDK-activating kinase (CAK) enzymatic complex. CAK activates the cyclin-associated kinases CDK1, CDK2, CDK4 and CDK6 by threonine phosphorylation. CAK complexed to the core-TFIIH basal transcription factor activates RNA polymerase II by serine phosphorylation of the repetitive C-terminal domain (CTD) of its large subunit (POLR2A), allowing its escape from the promoter and elongation of the transcripts. Involved in cell cycle control and in RNA transcription by RNA polymerase II. Its expression and activity are constant throughout the cell cycle. The polypeptide is Cyclin-H (CCNH) (Bos taurus (Bovine)).